We begin with the raw amino-acid sequence, 175 residues long: Phytochrome-interacting ankyrin-repeat protein 1 (175 aa).

ANK repeat units lie at residues 30–59 (RGWTQLHIKAREGDLKAVKELLDQGADVNA), 67–96 (KGMTPLHLAAKGGHIEVMDLLLERGANMEA), and 102–131 (CGWTPLHAAAKERKREAVKFLVGNGAFLPD).

As to quaternary structure, interacts with phytochrome A (PHYA), both in Pr and Pfr forms.

The protein localises to the cytoplasm. The protein resides in the nucleus. Its subcellular location is the mitochondrion. This chain is Phytochrome-interacting ankyrin-repeat protein 1, found in Arabidopsis thaliana (Mouse-ear cress).